Here is a 329-residue protein sequence, read N- to C-terminus: 4-hydroxythreonine-4-phosphate dehydrogenase (329 aa).

2 residues coordinate substrate: His-136 and Thr-137. Positions 166, 211, and 266 each coordinate a divalent metal cation. Residues Lys-274, Asn-283, and Arg-292 each contribute to the substrate site.

The protein belongs to the PdxA family. Homodimer. Zn(2+) serves as cofactor. The cofactor is Mg(2+). Requires Co(2+) as cofactor.

It localises to the cytoplasm. The catalysed reaction is 4-(phosphooxy)-L-threonine + NAD(+) = 3-amino-2-oxopropyl phosphate + CO2 + NADH. It participates in cofactor biosynthesis; pyridoxine 5'-phosphate biosynthesis; pyridoxine 5'-phosphate from D-erythrose 4-phosphate: step 4/5. Catalyzes the NAD(P)-dependent oxidation of 4-(phosphooxy)-L-threonine (HTP) into 2-amino-3-oxo-4-(phosphooxy)butyric acid which spontaneously decarboxylates to form 3-amino-2-oxopropyl phosphate (AHAP). In Neisseria meningitidis serogroup B (strain ATCC BAA-335 / MC58), this protein is 4-hydroxythreonine-4-phosphate dehydrogenase.